We begin with the raw amino-acid sequence, 434 residues long: Exopolygalacturonase X-1 (434 aa).

The first 22 residues, 1–22 (MKLSHLLTSAVSVLSLGLTVEG), serve as a signal peptide directing secretion. N-linked (GlcNAc...) asparagine glycans are attached at residues Asn113, Asn129, and Asn199. One copy of the PbH1 1 repeat lies at 231–252 (SKNIVIQNSVINNGDDCVSFKP). The active-site Proton donor is the Asp245. Cys247 and Cys264 are disulfide-bonded. Asn253 and Asn265 each carry an N-linked (GlcNAc...) asparagine glycan. The PbH1 2 repeat unit spans residues 254-274 (STEILVQNLYCNGSHGISVGS). Residue His268 is part of the active site. N-linked (GlcNAc...) asparagine glycosylation is found at Asn292, Asn297, Asn329, Asn354, and Asn364. Residues 327–348 (VSNITYEDMYIENVDWAIEITQ) form a PbH1 3 repeat. Residues 362 to 405 (PSNLTISDVYISNMYGTTSSARDPNIGTIVCSSPDVCSNIYVEN) form a PbH1 4 repeat. A disulfide bridge links Cys392 with Cys398. N-linked (GlcNAc...) asparagine glycosylation is found at Asn423 and Asn430.

It belongs to the glycosyl hydrolase 28 family.

Its subcellular location is the secreted. It carries out the reaction [(1-&gt;4)-alpha-D-galacturonosyl](n) + H2O = alpha-D-galacturonate + [(1-&gt;4)-alpha-D-galacturonosyl](n-1). In terms of biological role, specific in hydrolyzing the terminal glycosidic bond of polygalacturonic acid and oligogalacturonates. This chain is Exopolygalacturonase X-1 (pgaX-1), found in Emericella nidulans (strain FGSC A4 / ATCC 38163 / CBS 112.46 / NRRL 194 / M139) (Aspergillus nidulans).